Reading from the N-terminus, the 187-residue chain is Putative manganese efflux pump MntP (187 aa).

The next 6 membrane-spanning stretches (helical) occupy residues 3 to 23 (FYSL…VSLC), 35 to 55 (HYLI…TIGY), 56 to 76 (FIGI…AFIL), 107 to 127 (LALA…FAFL), 129 to 149 (VNLL…CIIA), and 166 to 186 (LLGG…HLFF).

It belongs to the MntP (TC 9.B.29) family.

Its subcellular location is the cell inner membrane. Its function is as follows. Probably functions as a manganese efflux pump. The polypeptide is Putative manganese efflux pump MntP (Campylobacter jejuni subsp. doylei (strain ATCC BAA-1458 / RM4099 / 269.97)).